Reading from the N-terminus, the 115-residue chain is Ribonuclease P protein component 4 (115 aa).

Residues cysteine 66, cysteine 69, cysteine 96, and cysteine 99 each contribute to the Zn(2+) site.

Belongs to the eukaryotic/archaeal RNase P protein component 4 family. As to quaternary structure, consists of a catalytic RNA component and at least 4-5 protein subunits. The cofactor is Zn(2+).

The protein localises to the cytoplasm. It catalyses the reaction Endonucleolytic cleavage of RNA, removing 5'-extranucleotides from tRNA precursor.. In terms of biological role, part of ribonuclease P, a protein complex that generates mature tRNA molecules by cleaving their 5'-ends. This chain is Ribonuclease P protein component 4, found in Hyperthermus butylicus (strain DSM 5456 / JCM 9403 / PLM1-5).